A 1238-amino-acid polypeptide reads, in one-letter code: Multifunctional 2-oxoglutarate metabolism enzyme (1238 aa).

The tract at residues 1–41 is 2-oxoglutarate dehydrogenase E1, N-terminal part; the sequence is MANISSPFGQNEWLVEEMYRKFRDDPSSVDPSWHEFLVDYN. Positions 42–97 are linker; that stretch reads PESTAEPVLTDPTSTDKQPSATPQAKPAAAADPVASRAKPATTPTVANGTAAGSAA. Residues 44-108 are disordered; sequence STAEPVLTDP…PAKTTTTPPI (65 aa). The segment covering 59–107 has biased composition (low complexity); that stretch reads QPSATPQAKPAAAADPVASRAKPATTPTVANGTAAGSAAAPAKTTTTPP. The segment at 98–346 is succinyltransferase E2; that stretch reads APAKTTTTPP…LRTIHEMVLS (249 aa). The active-site Proton acceptor; for succinyltransferase activity is H325. Positions 347–1238 are 2-oxoglutarate dehydrogenase E1, C-terminal part; it reads DSFWDEIFRE…QQEILDTAFG (892 aa). A thiamine diphosphate-binding site is contributed by R551. 2-oxoglutarate contacts are provided by H590 and S615. 6 residues coordinate thiamine diphosphate: S615, L617, D657, A658, A659, and N690. D657 is a Mg(2+) binding site. Mg(2+) contacts are provided by N690 and I692. Positions 795 to 825 form a coiled coil; sequence DISLKEAEDALRDYQGQLERVFNEVRDLEKH. H1032 contacts 2-oxoglutarate. Positions 1050, 1066, 1101, 1104, 1154, 1161, and 1162 each coordinate acetyl-CoA.

It belongs to the 2-oxoacid dehydrogenase family. Kgd subfamily. As to quaternary structure, homodimer. The 2-oxoglutarate dehydrogenase (ODH) complex contains multiple copies of three enzymatic components: 2-oxoglutarate dehydrogenase (E1), dihydrolipoamide succinyltransferase (E2) and lipoamide dehydrogenase (E3). Mg(2+) is required as a cofactor. Thiamine diphosphate serves as cofactor.

It catalyses the reaction glyoxylate + 2-oxoglutarate + H(+) = 2-hydroxy-3-oxoadipate + CO2. The catalysed reaction is 2-oxoglutarate + H(+) = succinate semialdehyde + CO2. It carries out the reaction N(6)-[(R)-lipoyl]-L-lysyl-[protein] + 2-oxoglutarate + H(+) = N(6)-[(R)-S(8)-succinyldihydrolipoyl]-L-lysyl-[protein] + CO2. The enzyme catalyses N(6)-[(R)-dihydrolipoyl]-L-lysyl-[protein] + succinyl-CoA = N(6)-[(R)-S(8)-succinyldihydrolipoyl]-L-lysyl-[protein] + CoA. The protein operates within carbohydrate metabolism; tricarboxylic acid cycle; succinate from 2-oxoglutarate (transferase route): step 1/2. It participates in carbohydrate metabolism; tricarboxylic acid cycle; succinyl-CoA from 2-oxoglutarate (dehydrogenase route): step 1/1. Alpha-ketoglutarate dehydrogenase and decarboxylase activities are inhibited by unphosphorylated GarA, and allosterically activated by acetyl-CoA, the main substrate of the TCA cycle. In terms of biological role, shows three enzymatic activities that share a first common step, the attack of thiamine-PP on 2-oxoglutarate (alpha-ketoglutarate, KG), leading to the formation of an enamine-thiamine-PP intermediate upon decarboxylation. Thus, displays KGD activity, catalyzing the decarboxylation from five-carbon 2-oxoglutarate to four-carbon succinate semialdehyde (SSA). Also catalyzes C-C bond formation between the activated aldehyde formed after decarboxylation of alpha-ketoglutarate and the carbonyl of glyoxylate (GLX), to yield 2-hydroxy-3-oxoadipate (HOA), which spontaneously decarboxylates to form 5-hydroxylevulinate (HLA). And is also a component of the 2-oxoglutarate dehydrogenase (ODH) complex, that catalyzes the overall conversion of 2-oxoglutarate to succinyl-CoA and CO(2). The KG decarboxylase and KG dehydrogenase reactions provide two alternative, tightly regulated, pathways connecting the oxidative and reductive branches of the TCA cycle. The sequence is that of Multifunctional 2-oxoglutarate metabolism enzyme (kgd) from Mycobacterium leprae (strain TN).